The chain runs to 100 residues: Integration host factor subunit beta (100 aa).

The segment at 81–100 is disordered; it reads KPGKELRDRVNEDEHEEAHT. A compositionally biased stretch (basic and acidic residues) spans 82-100; that stretch reads PGKELRDRVNEDEHEEAHT.

Belongs to the bacterial histone-like protein family. Heterodimer of an alpha and a beta chain.

In terms of biological role, this protein is one of the two subunits of integration host factor, a specific DNA-binding protein that functions in genetic recombination as well as in transcriptional and translational control. The protein is Integration host factor subunit beta (ihfB) of Pseudomonas putida (Arthrobacter siderocapsulatus).